Reading from the N-terminus, the 352-residue chain is Photosystem II D2 protein (352 aa).

The helical transmembrane segment at 40 to 60 (CAYLALGGWLTGTSFVTSWYT) threads the bilayer. Residue His-117 coordinates chlorophyll a. A helical membrane pass occupies residues 124–140 (GFMLRQFEIARLVGVRP). Gln-129 and Asn-142 together coordinate pheophytin a. The helical transmembrane segment at 152–165 (VFVSVFLMYPLGQS) threads the bilayer. His-197 is a chlorophyll a binding site. Residues 207–227 (GALLCAIHGATVENTLFEDSE) traverse the membrane as a helical segment. Positions 214 and 261 each coordinate a plastoquinone. Residue His-214 coordinates Fe cation. His-268 is a binding site for Fe cation. Residues 278–294 (GLWMSSIGIVGLALNLR) form a helical membrane-spanning segment.

The protein belongs to the reaction center PufL/M/PsbA/D family. In terms of assembly, PSII is composed of 1 copy each of membrane proteins PsbA, PsbB, PsbC, PsbD, PsbE, PsbF, PsbH, PsbI, PsbJ, PsbK, PsbL, PsbM, PsbT, PsbX, PsbY, PsbZ, Psb30/Ycf12, peripheral proteins PsbO, CyanoQ (PsbQ), PsbU, PsbV and a large number of cofactors. It forms dimeric complexes. The D1/D2 heterodimer binds P680, chlorophylls that are the primary electron donor of PSII, and subsequent electron acceptors. It shares a non-heme iron and each subunit binds pheophytin, quinone, additional chlorophylls, carotenoids and lipids. There is also a Cl(-1) ion associated with D1 and D2, which is required for oxygen evolution. The PSII complex binds additional chlorophylls, carotenoids and specific lipids. serves as cofactor.

The protein resides in the cellular thylakoid membrane. The enzyme catalyses 2 a plastoquinone + 4 hnu + 2 H2O = 2 a plastoquinol + O2. Functionally, photosystem II (PSII) is a light-driven water:plastoquinone oxidoreductase that uses light energy to abstract electrons from H(2)O, generating O(2) and a proton gradient subsequently used for ATP formation. It consists of a core antenna complex that captures photons, and an electron transfer chain that converts photonic excitation into a charge separation. The D1/D2 (PsbA/PsbD) reaction center heterodimer binds P680, the primary electron donor of PSII as well as several subsequent electron acceptors. D2 is needed for assembly of a stable PSII complex. The polypeptide is Photosystem II D2 protein (Synechococcus elongatus (strain ATCC 33912 / PCC 7942 / FACHB-805) (Anacystis nidulans R2)).